The chain runs to 214 residues: Large ribosomal subunit protein bL25 (214 aa).

2 disordered regions span residues 1-23 (MSNE…SRRL) and 182-214 (DHDQ…ASEE). Acidic residues predominate over residues 200-214 (DDDDAAEGEEAASEE).

It belongs to the bacterial ribosomal protein bL25 family. CTC subfamily. As to quaternary structure, part of the 50S ribosomal subunit; part of the 5S rRNA/L5/L18/L25 subcomplex. Contacts the 5S rRNA. Binds to the 5S rRNA independently of L5 and L18.

Its function is as follows. This is one of the proteins that binds to the 5S RNA in the ribosome where it forms part of the central protuberance. In Alcanivorax borkumensis (strain ATCC 700651 / DSM 11573 / NCIMB 13689 / SK2), this protein is Large ribosomal subunit protein bL25.